Consider the following 179-residue polypeptide: Large ribosomal subunit protein uL5 (179 aa).

It belongs to the universal ribosomal protein uL5 family. Part of the 50S ribosomal subunit; part of the 5S rRNA/L5/L18/L25 subcomplex. Contacts the 5S rRNA and the P site tRNA. Forms a bridge to the 30S subunit in the 70S ribosome.

This is one of the proteins that bind and probably mediate the attachment of the 5S RNA into the large ribosomal subunit, where it forms part of the central protuberance. In the 70S ribosome it contacts protein S13 of the 30S subunit (bridge B1b), connecting the 2 subunits; this bridge is implicated in subunit movement. Contacts the P site tRNA; the 5S rRNA and some of its associated proteins might help stabilize positioning of ribosome-bound tRNAs. The polypeptide is Large ribosomal subunit protein uL5 (Desulfotalea psychrophila (strain LSv54 / DSM 12343)).